A 160-amino-acid polypeptide reads, in one-letter code: Putative pre-16S rRNA nuclease (160 aa).

It belongs to the YqgF nuclease family.

The protein localises to the cytoplasm. Functionally, could be a nuclease involved in processing of the 5'-end of pre-16S rRNA. The protein is Putative pre-16S rRNA nuclease of Cereibacter sphaeroides (strain ATCC 17029 / ATH 2.4.9) (Rhodobacter sphaeroides).